The chain runs to 403 residues: Ribosomal RNA large subunit methyltransferase I (403 aa).

A PUA domain is found at 9 to 88; the sequence is YPRLVLSKGR…ESIDIAFFTR (80 aa).

This sequence belongs to the methyltransferase superfamily. RlmI family.

The protein resides in the cytoplasm. The catalysed reaction is cytidine(1962) in 23S rRNA + S-adenosyl-L-methionine = 5-methylcytidine(1962) in 23S rRNA + S-adenosyl-L-homocysteine + H(+). In terms of biological role, specifically methylates the cytosine at position 1962 (m5C1962) of 23S rRNA. The chain is Ribosomal RNA large subunit methyltransferase I from Salmonella paratyphi A (strain ATCC 9150 / SARB42).